Reading from the N-terminus, the 489-residue chain is UDP-N-acetylmuramate--L-alanine ligase (489 aa).

128-134 is a binding site for ATP; it reads GTHGKTT.

Belongs to the MurCDEF family.

The protein localises to the cytoplasm. It carries out the reaction UDP-N-acetyl-alpha-D-muramate + L-alanine + ATP = UDP-N-acetyl-alpha-D-muramoyl-L-alanine + ADP + phosphate + H(+). The protein operates within cell wall biogenesis; peptidoglycan biosynthesis. Cell wall formation. The polypeptide is UDP-N-acetylmuramate--L-alanine ligase (Shewanella halifaxensis (strain HAW-EB4)).